The following is a 215-amino-acid chain: Pyridoxine/pyridoxamine 5'-phosphate oxidase (215 aa).

Residues 9-12 and Lys-69 contribute to the substrate site; that span reads RRDY. FMN is bound by residues 64-69, 79-80, Lys-86, and Gln-108; these read RVLLLK and FS. Residues Tyr-126, Arg-130, and Ser-134 each coordinate substrate. FMN is bound by residues 143–144 and Trp-188; that span reads QS. Residue 194–196 coordinates substrate; sequence RLH. Arg-198 serves as a coordination point for FMN.

The protein belongs to the pyridoxamine 5'-phosphate oxidase family. In terms of assembly, homodimer. FMN serves as cofactor.

The enzyme catalyses pyridoxamine 5'-phosphate + O2 + H2O = pyridoxal 5'-phosphate + H2O2 + NH4(+). It carries out the reaction pyridoxine 5'-phosphate + O2 = pyridoxal 5'-phosphate + H2O2. Its pathway is cofactor metabolism; pyridoxal 5'-phosphate salvage; pyridoxal 5'-phosphate from pyridoxamine 5'-phosphate: step 1/1. It functions in the pathway cofactor metabolism; pyridoxal 5'-phosphate salvage; pyridoxal 5'-phosphate from pyridoxine 5'-phosphate: step 1/1. Catalyzes the oxidation of either pyridoxine 5'-phosphate (PNP) or pyridoxamine 5'-phosphate (PMP) into pyridoxal 5'-phosphate (PLP). In Ectopseudomonas mendocina (strain ymp) (Pseudomonas mendocina), this protein is Pyridoxine/pyridoxamine 5'-phosphate oxidase.